The sequence spans 45 residues: Large ribosomal subunit protein bL34 (45 aa).

It belongs to the bacterial ribosomal protein bL34 family.

The protein is Large ribosomal subunit protein bL34 of Acidothermus cellulolyticus (strain ATCC 43068 / DSM 8971 / 11B).